Consider the following 286-residue polypeptide: MAENTMWHETLHDQFGQYFAVDNVLYHEKTDHQDLIIFENAAFGRVMALDGVVQTTERDEFIYHEMMTHVPLLAHGHAKHVLIIGGGDGAMLREVTRHKNVETITMVEIDAGVVSFCRQYLPNHNAGSYDDPRFTLVIDDGVNFVNQTHQTFDVIISDCTDPIGPGESLFTSAFYEGCKRCLNPGGIFVAQNGVCFLQQDEALDSHRKLSHYFSDVGFYQAAIPTYYGGIMTFAWATDNGALRHLSSEIIQARFHAAGLKCRYYNPAIHAAAFALPQYLHDALSAQ.

The 234-residue stretch at 5–238 folds into the PABS domain; it reads TMWHETLHDQ…GIMTFAWATD (234 aa). Gln-33 lines the S-methyl-5'-thioadenosine pocket. Spermidine contacts are provided by His-64 and Asp-88. S-methyl-5'-thioadenosine-binding positions include Glu-108 and 140–141; that span reads DG. Residue Asp-158 is the Proton acceptor of the active site. Position 158–161 (158–161) interacts with spermidine; sequence DCTD. Residue Pro-165 participates in S-methyl-5'-thioadenosine binding.

The protein belongs to the spermidine/spermine synthase family. Homodimer or homotetramer.

The protein localises to the cytoplasm. The catalysed reaction is S-adenosyl 3-(methylsulfanyl)propylamine + putrescine = S-methyl-5'-thioadenosine + spermidine + H(+). It participates in amine and polyamine biosynthesis; spermidine biosynthesis; spermidine from putrescine: step 1/1. Its function is as follows. Catalyzes the irreversible transfer of a propylamine group from the amino donor S-adenosylmethioninamine (decarboxy-AdoMet) to putrescine (1,4-diaminobutane) to yield spermidine. This chain is Polyamine aminopropyltransferase, found in Salmonella newport (strain SL254).